Consider the following 423-residue polypeptide: N-acylneuraminate cytidylyltransferase B (423 aa).

Substrate-binding residues include R30, N40, R88, S97, S99, and Q120. R178 is an active-site residue.

This sequence belongs to the CMP-NeuNAc synthase family. In terms of assembly, homotetramer.

It localises to the cytoplasm. The catalysed reaction is an N-acylneuraminate + CTP = a CMP-N-acyl-beta-neuraminate + diphosphate. It functions in the pathway amino-sugar metabolism; N-acetylneuraminate metabolism. Functionally, catalyzes the activation of 2-keto-3-deoxy-D-glycero-D-galacto-nononic acid (KDN) to cytidine 5'-monophosphate 2-keto-3-deoxy-D-glycero-D-galacto-nononic acid (CMP-KDN), a substrate required for the addition of sialic acid. Also has weak activity towards N-acetylneuraminic acid (NeuNAc) and N-glycolylneuraminic acid (Neu5Gc). This Danio rerio (Zebrafish) protein is N-acylneuraminate cytidylyltransferase B.